Reading from the N-terminus, the 307-residue chain is Quinolinate synthase (307 aa).

Iminosuccinate-binding residues include His23 and Ser40. Cys86 contacts [4Fe-4S] cluster. Residues 112–114 (YVN) and Ser129 contribute to the iminosuccinate site. Position 173 (Cys173) interacts with [4Fe-4S] cluster. Residues 199–201 (HPE) and Thr216 each bind iminosuccinate. Cys265 serves as a coordination point for [4Fe-4S] cluster.

The protein belongs to the quinolinate synthase family. Type 2 subfamily. It depends on [4Fe-4S] cluster as a cofactor.

The protein resides in the cytoplasm. The enzyme catalyses iminosuccinate + dihydroxyacetone phosphate = quinolinate + phosphate + 2 H2O + H(+). It participates in cofactor biosynthesis; NAD(+) biosynthesis; quinolinate from iminoaspartate: step 1/1. In terms of biological role, catalyzes the condensation of iminoaspartate with dihydroxyacetone phosphate to form quinolinate. In Methanocaldococcus jannaschii (strain ATCC 43067 / DSM 2661 / JAL-1 / JCM 10045 / NBRC 100440) (Methanococcus jannaschii), this protein is Quinolinate synthase.